Here is a 106-residue protein sequence, read N- to C-terminus: Large ribosomal subunit protein eL42 (106 aa).

It belongs to the eukaryotic ribosomal protein eL42 family.

The protein is Large ribosomal subunit protein eL42 (RPL44) of Eremothecium gossypii (strain ATCC 10895 / CBS 109.51 / FGSC 9923 / NRRL Y-1056) (Yeast).